The primary structure comprises 103 residues: MAQFDNVSVKKKANVYFDGKCVSHTVLFPNGTRATVGVIFPGALTFNTGSPELMEINSGACKVRLSGESDWKAYGAGEKFTVPGNSSFDIEVTETLDYVCHFE.

This sequence belongs to the nucleoside phosphorylase PpnP family.

It carries out the reaction a purine D-ribonucleoside + phosphate = a purine nucleobase + alpha-D-ribose 1-phosphate. The enzyme catalyses adenosine + phosphate = alpha-D-ribose 1-phosphate + adenine. The catalysed reaction is cytidine + phosphate = cytosine + alpha-D-ribose 1-phosphate. It catalyses the reaction guanosine + phosphate = alpha-D-ribose 1-phosphate + guanine. It carries out the reaction inosine + phosphate = alpha-D-ribose 1-phosphate + hypoxanthine. The enzyme catalyses thymidine + phosphate = 2-deoxy-alpha-D-ribose 1-phosphate + thymine. The catalysed reaction is uridine + phosphate = alpha-D-ribose 1-phosphate + uracil. It catalyses the reaction xanthosine + phosphate = alpha-D-ribose 1-phosphate + xanthine. Its function is as follows. Catalyzes the phosphorolysis of diverse nucleosides, yielding D-ribose 1-phosphate and the respective free bases. Can use uridine, adenosine, guanosine, cytidine, thymidine, inosine and xanthosine as substrates. Also catalyzes the reverse reactions. The sequence is that of Pyrimidine/purine nucleoside phosphorylase from Methylobacillus flagellatus (strain ATCC 51484 / DSM 6875 / VKM B-1610 / KT).